Here is an 843-residue protein sequence, read N- to C-terminus: DNA-directed RNA polymerase subunit beta' (843 aa).

The Zn(2+) site is built by cysteine 70, cysteine 72, cysteine 85, and cysteine 88. Aspartate 686, aspartate 688, and aspartate 690 together coordinate Mg(2+).

This sequence belongs to the RNA polymerase beta' chain family. RpoC1 subfamily. As to quaternary structure, in plastids the minimal PEP RNA polymerase catalytic core is composed of four subunits: alpha, beta, beta', and beta''. When a (nuclear-encoded) sigma factor is associated with the core the holoenzyme is formed, which can initiate transcription. It depends on Mg(2+) as a cofactor. Zn(2+) serves as cofactor.

The protein resides in the plastid. The protein localises to the chloroplast. The enzyme catalyses RNA(n) + a ribonucleoside 5'-triphosphate = RNA(n+1) + diphosphate. Its function is as follows. DNA-dependent RNA polymerase catalyzes the transcription of DNA into RNA using the four ribonucleoside triphosphates as substrates. This is DNA-directed RNA polymerase subunit beta' from Trieres chinensis (Marine centric diatom).